The sequence spans 344 residues: Mitochondrial genome maintenance exonuclease 1 (344 aa).

Catalysis depends on residues Asp-238, Asp-251, and Lys-253. Ser-343 is modified (phosphoserine).

Belongs to the MGME1 family.

The protein resides in the mitochondrion. Its function is as follows. Metal-dependent single-stranded DNA (ssDNA) exonuclease involved in mitochondrial genome maintenance. Has preference for 5'-3' exonuclease activity but is also capable of endonuclease activity on linear substrates. Necessary for maintenance of proper 7S DNA levels. Probably involved in mitochondrial DNA (mtDNA) repair, possibly via the processing of displaced DNA containing Okazaki fragments during RNA-primed DNA synthesis on the lagging strand or via processing of DNA flaps during long-patch base excision repair. Specifically binds 5-hydroxymethylcytosine (5hmC)-containing DNA in stem cells. The protein is Mitochondrial genome maintenance exonuclease 1 of Homo sapiens (Human).